An 88-amino-acid chain; its full sequence is Small ribosomal subunit protein bS18B (88 aa).

The protein belongs to the bacterial ribosomal protein bS18 family. In terms of assembly, part of the 30S ribosomal subunit. Forms a tight heterodimer with protein bS6.

Functionally, binds as a heterodimer with protein bS6 to the central domain of the 16S rRNA, where it helps stabilize the platform of the 30S subunit. The polypeptide is Small ribosomal subunit protein bS18B (Roseiflexus castenholzii (strain DSM 13941 / HLO8)).